The following is a 420-amino-acid chain: Putative U-box domain-containing protein 58 (420 aa).

Positions 4-168 constitute an MIF4G domain; that stretch reads NSYVLFARLC…EDALAMKKED (165 aa). The stretch at 139 to 352 forms a coiled coil; the sequence is SRVVELEGNY…TAKEQMEKRQ (214 aa). Positions 352-420 constitute a U-box domain; it reads QPPSSFFCPI…ALRSAIEELV (69 aa).

The catalysed reaction is S-ubiquitinyl-[E2 ubiquitin-conjugating enzyme]-L-cysteine + [acceptor protein]-L-lysine = [E2 ubiquitin-conjugating enzyme]-L-cysteine + N(6)-ubiquitinyl-[acceptor protein]-L-lysine.. It participates in protein modification; protein ubiquitination. Its function is as follows. Functions as an E3 ubiquitin ligase. The sequence is that of Putative U-box domain-containing protein 58 (PUB58) from Arabidopsis thaliana (Mouse-ear cress).